We begin with the raw amino-acid sequence, 345 residues long: L-threonine 3-dehydrogenase (345 aa).

Cys-39 is a binding site for Zn(2+). Active-site charge relay system residues include Thr-41 and His-44. Residues His-64, Glu-65, Cys-94, Cys-97, Cys-100, and Cys-108 each contribute to the Zn(2+) site. NAD(+) contacts are provided by residues Ile-176, Asp-196, Arg-201, 263–265 (LGI), and 287–288 (VY).

Belongs to the zinc-containing alcohol dehydrogenase family. In terms of assembly, homotetramer. The cofactor is Zn(2+).

It is found in the cytoplasm. It carries out the reaction L-threonine + NAD(+) = (2S)-2-amino-3-oxobutanoate + NADH + H(+). It functions in the pathway amino-acid degradation; L-threonine degradation via oxydo-reductase pathway; glycine from L-threonine: step 1/2. Functionally, catalyzes the NAD(+)-dependent oxidation of L-threonine to 2-amino-3-ketobutyrate. The protein is L-threonine 3-dehydrogenase of Anaeromyxobacter dehalogenans (strain 2CP-C).